A 404-amino-acid polypeptide reads, in one-letter code: CCA-adding enzyme (404 aa).

ATP contacts are provided by G27 and R30. 2 residues coordinate CTP: G27 and R30. Mg(2+)-binding residues include D40 and D42. Residues R111, D154, R157, R160, and R163 each contribute to the ATP site. Positions 111, 154, 157, 160, and 163 each coordinate CTP.

This sequence belongs to the tRNA nucleotidyltransferase/poly(A) polymerase family. Bacterial CCA-adding enzyme type 3 subfamily. In terms of assembly, homodimer. Mg(2+) is required as a cofactor.

It catalyses the reaction a tRNA precursor + 2 CTP + ATP = a tRNA with a 3' CCA end + 3 diphosphate. It carries out the reaction a tRNA with a 3' CCA end + 2 CTP + ATP = a tRNA with a 3' CCACCA end + 3 diphosphate. In terms of biological role, catalyzes the addition and repair of the essential 3'-terminal CCA sequence in tRNAs without using a nucleic acid template. Adds these three nucleotides in the order of C, C, and A to the tRNA nucleotide-73, using CTP and ATP as substrates and producing inorganic pyrophosphate. tRNA 3'-terminal CCA addition is required both for tRNA processing and repair. Also involved in tRNA surveillance by mediating tandem CCA addition to generate a CCACCA at the 3' terminus of unstable tRNAs. While stable tRNAs receive only 3'-terminal CCA, unstable tRNAs are marked with CCACCA and rapidly degraded. This chain is CCA-adding enzyme, found in Geobacillus sp. (strain WCH70).